The chain runs to 463 residues: uncharacterized protein (463 aa).

The protein belongs to the UbiD family.

This is an uncharacterized protein from Rhodospirillum rubrum.